A 3165-amino-acid chain; its full sequence is Protein eyes shut homolog (3165 aa).

An N-terminal signal peptide occupies residues 1-21 (MTDKSIIILSLMVFHSSFING). N-linked (GlcNAc...) asparagine glycans are attached at residues Asn42, Asn105, Asn117, and Asn166. EGF-like domains follow at residues 170 to 212 (KQQF…KYCQ), 213 to 254 (ELDA…KNCS), and 256 to 292 (IIVQ…PFCE). 9 disulfide bridges follow: Cys174–Cys189, Cys183–Cys200, Cys202–Cys211, Cys217–Cys228, Cys222–Cys242, Cys244–Cys253, Cys260–Cys270, Cys265–Cys280, and Cys282–Cys291. Asn252, Asn269, and Asn272 each carry an N-linked (GlcNAc...) asparagine glycan. Asn311 and Asn343 each carry an N-linked (GlcNAc...) asparagine glycan. 2 EGF-like domains span residues 332–368 (DVSE…LLCK) and 370–406 (FQTS…KNCE). Disulfide bonds link Cys341/Cys356 and Cys358/Cys367. Asn382 carries N-linked (GlcNAc...) asparagine glycosylation. Cys396 and Cys405 are disulfide-bonded. N-linked (GlcNAc...) asparagine glycans are attached at residues Asn506, Asn520, Asn521, Asn566, and Asn573. 3 consecutive EGF-like domains span residues 566–602 (NITD…RLCV), 604–641 (NVDY…NICE), and 643–679 (DIED…TRCE). Intrachain disulfides connect Cys592/Cys601 and Cys608/Cys620. N-linked (GlcNAc...) asparagine glycans are attached at residues Asn611 and Asn628. Cys629 and Cys640 are oxidised to a cystine. N-linked (GlcNAc...) asparagine glycosylation is present at Asn654. 4 cysteine pairs are disulfide-bonded: Cys669–Cys678, Cys685–Cys696, Cys690–Cys705, and Cys707–Cys719. Residues 681–720 (DLDECALHPCKSGATCIDQPGNYFCQCGPPFKVVDGFSCL) enclose the EGF-like 9; calcium-binding domain. The EGF-like 10 domain maps to 733 to 769 (NIDNCILNAFEHNSTYKDLHLSYQCVCLSGWEGNFCE). Asn745 carries N-linked (GlcNAc...) asparagine glycosylation. Disulfide bonds link Cys759–Cys768, Cys775–Cys786, Cys780–Cys795, Cys797–Cys806, Cys813–Cys824, Cys818–Cys835, Cys837–Cys846, Cys853–Cys866, Cys860–Cys876, Cys878–Cys887, Cys894–Cys905, Cys899–Cys914, Cys916–Cys925, Cys932–Cys943, Cys937–Cys952, Cys954–Cys963, Cys970–Cys981, Cys975–Cys990, Cys992–Cys1001, Cys1008–Cys1019, Cys1013–Cys1028, Cys1030–Cys1039, Cys1046–Cys1056, Cys1051–Cys1065, Cys1067–Cys1076, Cys1083–Cys1094, Cys1088–Cys1103, Cys1105–Cys1114, Cys1121–Cys1137, Cys1131–Cys1147, Cys1149–Cys1158, Cys1165–Cys1176, Cys1170–Cys1185, and Cys1187–Cys1196. Residues 771-807 (ESNECKMNPCKNNSTCTDLYKSYRCECTSGWTGQNCS) enclose the EGF-like 11; calcium-binding domain. Residues Asn782, Asn783, and Asn805 are each glycosylated (N-linked (GlcNAc...) asparagine). EGF-like domains follow at residues 809 to 847 (EINE…QFCH), 849 to 888 (RYNP…KHCE), and 890 to 926 (DVKE…SLCE). Asn862 and Asn863 each carry an N-linked (GlcNAc...) asparagine glycan. One can recognise an EGF-like 15; calcium-binding domain in the interval 928 to 964 (EINECSSEPCKNNGTCVDLTNRFFCNCEPGYHGPFCE). A glycan (N-linked (GlcNAc...) asparagine) is linked at Asn940. Residues 966–1002 (EVNKCKISPCLDEENCVYRTDRYNCLCAPGYTGINCE) enclose the EGF-like 16 domain. The 37-residue stretch at 1004-1040 (NLDECLSEPCLHDGVCIDGINHYTCDCKSGFFGTHCE) folds into the EGF-like 17; calcium-binding domain. EGF-like domains follow at residues 1042–1077 (NAND…IQCK), 1079–1115 (KIND…AYCE), and 1117–1159 (SIDN…QFCE). The EGF-like 21; calcium-binding domain occupies 1161-1197 (NINECSSSPCLHGANCEDHINGYVCKCQPGWSGHHCE). Asn1509, Asn1906, Asn1941, and Asn2033 each carry an N-linked (GlcNAc...) asparagine glycan. One can recognise a Laminin G-like 1 domain in the interval 1883 to 2063 (FSCVCYYGDS…AVRNYHINNC (181 aa)). Intrachain disulfides connect Cys2037/Cys2063, Cys2103/Cys2114, Cys2108/Cys2128, and Cys2130/Cys2139. The EGF-like 22 domain occupies 2099–2140 (APSVCQEDVCHNGGTCRPIFLSSGIVSFQCDCPLHFTGRFCE). The Laminin G-like 2 domain occupies 2145 to 2339 (LFFPSFSGNS…NIENCHVPWC (195 aa)). 3 N-linked (GlcNAc...) asparagine glycosylation sites follow: Asn2170, Asn2185, and Asn2228. Disulfide bonds link Cys2308/Cys2339, Cys2339/Cys2350, Cys2344/Cys2359, Cys2375/Cys2386, Cys2380/Cys2396, and Cys2398/Cys2407. EGF-like domains follow at residues 2335-2368 (HVPW…YSGK) and 2371-2408 (QFAS…PLCT). Asn2347 carries an N-linked (GlcNAc...) asparagine glycan. 5 N-linked (GlcNAc...) asparagine glycosylation sites follow: Asn2412, Asn2453, Asn2484, Asn2506, and Asn2532. A Laminin G-like 3 domain is found at 2419–2609 (SGTDAFGYTS…PNAGRSVGQC (191 aa)). Disulfide bonds link Cys2576–Cys2609, Cys2614–Cys2625, and Cys2619–Cys2634. EGF-like domains follow at residues 2610–2646 (HASP…AFCT) and 2648–2689 (TVSI…IYCE). A glycan (N-linked (GlcNAc...) asparagine) is linked at Asn2635. 4 cysteine pairs are disulfide-bonded: Cys2636–Cys2645, Cys2652–Cys2668, Cys2662–Cys2677, and Cys2679–Cys2688. The region spanning 2717 to 2895 (DPSFRSSELS…AKGGSNVGDC (179 aa)) is the Laminin G-like 4 domain. Residues Asn2775, Asn2800, and Asn2824 are each glycosylated (N-linked (GlcNAc...) asparagine). Intrachain disulfides connect Cys2868–Cys2895, Cys2900–Cys2911, Cys2905–Cys2920, and Cys2922–Cys2931. EGF-like domains lie at 2896–2932 (DGTA…NICN) and 2933–2970 (QSAY…RYCE). Asn2914 carries an N-linked (GlcNAc...) asparagine glycan. Asn2932 carries N-linked (GlcNAc...) asparagine glycosylation. 3 disulfides stabilise this stretch: Cys2937/Cys2948, Cys2942/Cys2958, and Cys2960/Cys2969. N-linked (GlcNAc...) asparagine glycans are attached at residues Asn2971, Asn3006, Asn3036, Asn3057, Asn3073, and Asn3082. One can recognise a Laminin G-like 5 domain in the interval 2975–3165 (FTTAKFMGNS…YDGDEQNEVT (191 aa)).

This sequence belongs to the EYS family. As to expression, expressed in retina (at protein level).

It is found in the cell projection. Its subcellular location is the cilium. The protein localises to the photoreceptor outer segment. The protein resides in the cytoplasm. It localises to the cytoskeleton. It is found in the cilium axoneme. Its subcellular location is the microtubule organizing center. The protein localises to the centrosome. The protein resides in the secreted. It localises to the extracellular space. It is found in the extracellular matrix. Its subcellular location is the interphotoreceptor matrix. Required to maintain the integrity of photoreceptor cells. Specifically required for normal morphology of the photoreceptor ciliary pocket, and might thus facilitate protein trafficking between the photoreceptor inner and outer segments via the transition zone. In Macaca fascicularis (Crab-eating macaque), this protein is Protein eyes shut homolog.